The chain runs to 354 residues: ATP-dependent (S)-NAD(P)H-hydrate dehydratase (354 aa).

The 309-residue stretch at 42–350 (AENILRAITP…ECLGRSLEDI (309 aa)) folds into the YjeF C-terminal domain. Residues Gly-155 and 208–214 (NVNEYKR) each bind (6S)-NADPHX. ATP contacts are provided by residues 248-252 (KGKSD) and 267-276 (GSPRRCGGQG). Asp-277 is a (6S)-NADPHX binding site.

It belongs to the NnrD/CARKD family. Requires Mg(2+) as cofactor.

It catalyses the reaction (6S)-NADHX + ATP = ADP + phosphate + NADH + H(+). The enzyme catalyses (6S)-NADPHX + ATP = ADP + phosphate + NADPH + H(+). In terms of biological role, catalyzes the dehydration of the S-form of NAD(P)HX at the expense of ATP, which is converted to ADP. Together with NAD(P)HX epimerase, which catalyzes the epimerization of the S- and R-forms, the enzyme allows the repair of both epimers of NAD(P)HX, a damaged form of NAD(P)H that is a result of enzymatic or heat-dependent hydration. The protein is ATP-dependent (S)-NAD(P)H-hydrate dehydratase of Vitis vinifera (Grape).